A 104-amino-acid chain; its full sequence is Proteasome subunit beta type-8 (104 aa).

The protein belongs to the peptidase T1B family. In terms of assembly, the 26S proteasome consists of a 20S proteasome core and two 19S regulatory subunits. The 20S proteasome core is composed of 28 subunits that are arranged in four stacked rings, resulting in a barrel-shaped structure. The two end rings are each formed by seven alpha subunits, and the two central rings are each formed by seven beta subunits. The catalytic chamber with the active sites is on the inside of the barrel. Component of the immunoproteasome, where it displaces the equivalent housekeeping subunit PSMB5. Component of the spermatoproteasome, a form of the proteasome specifically found in testis. Directly interacts with POMP.

The protein resides in the cytoplasm. It is found in the nucleus. The enzyme catalyses Cleavage of peptide bonds with very broad specificity.. The proteasome is a multicatalytic proteinase complex which is characterized by its ability to cleave peptides with Arg, Phe, Tyr, Leu, and Glu adjacent to the leaving group at neutral or slightly basic pH. The proteasome has an ATP-dependent proteolytic activity. This subunit is involved in antigen processing to generate class I binding peptides. May participate in the generation of spliced peptides resulting from the ligation of two separate proteasomal cleavage products that are not contiguous in the parental protein. Required for adipocyte differentiation. The protein is Proteasome subunit beta type-8 (PSMB8) of Sus scrofa (Pig).